A 101-amino-acid polypeptide reads, in one-letter code: UPF0235 protein Cphamn1_2066 (101 aa).

Belongs to the UPF0235 family.

The protein is UPF0235 protein Cphamn1_2066 of Chlorobium phaeobacteroides (strain BS1).